Consider the following 534-residue polypeptide: NAD(P)H-quinone oxidoreductase chain 4 (534 aa).

14 helical membrane-spanning segments follow: residues 12-32, 44-64, 96-116, 120-140, 144-164, 176-196, 220-240, 251-271, 285-305, 314-334, 340-360, 384-404, 425-445, and 472-492; these read FPWL…IPFF, FALS…INGF, MPLI…AWPV, PKLF…VFAV, LLFF…LAIW, FIIY…AMGF, ILCY…VPLH, TAPV…YALL, FAPL…LTSF, IAYS…SFSS, AMLQ…LVGA, FALW…SGFV, VVMA…LLSM, and VYII…PRLV.

This sequence belongs to the complex I subunit 4 family.

Its subcellular location is the cellular thylakoid membrane. It carries out the reaction a plastoquinone + NADH + (n+1) H(+)(in) = a plastoquinol + NAD(+) + n H(+)(out). The catalysed reaction is a plastoquinone + NADPH + (n+1) H(+)(in) = a plastoquinol + NADP(+) + n H(+)(out). Functionally, NDH-1 shuttles electrons from NAD(P)H, via FMN and iron-sulfur (Fe-S) centers, to quinones in the respiratory chain. The immediate electron acceptor for the enzyme in this species is believed to be plastoquinone. Couples the redox reaction to proton translocation (for every two electrons transferred, four hydrogen ions are translocated across the cytoplasmic membrane), and thus conserves the redox energy in a proton gradient. The protein is NAD(P)H-quinone oxidoreductase chain 4 of Prochlorococcus marinus (strain AS9601).